Reading from the N-terminus, the 219-residue chain is Elongation factor Ts (219 aa).

The involved in Mg(2+) ion dislocation from EF-Tu stretch occupies residues 82–85 (TDFV).

Belongs to the EF-Ts family.

It is found in the cytoplasm. Its function is as follows. Associates with the EF-Tu.GDP complex and induces the exchange of GDP to GTP. It remains bound to the aminoacyl-tRNA.EF-Tu.GTP complex up to the GTP hydrolysis stage on the ribosome. This chain is Elongation factor Ts, found in Anaeromyxobacter dehalogenans (strain 2CP-1 / ATCC BAA-258).